The following is a 276-amino-acid chain: uncharacterized protein (276 aa).

Positions 1-16 are cleaved as a signal peptide; it reads MELGLILMFASAFVSA. N-linked (GlcNAc...) asparagine glycosylation occurs at N265.

This is an uncharacterized protein from Encephalitozoon cuniculi (strain GB-M1) (Microsporidian parasite).